A 371-amino-acid chain; its full sequence is SufE-like protein 1, chloroplastic/mitochondrial (371 aa).

The N-terminal 66 residues, 1-66 (MAAAMSSSCC…ISTGIVPPPS (66 aa)), are a transit peptide targeting the chloroplast and mitochondrion. C131 serves as the catalytic Cysteine persulfide intermediate. C131 bears the S-glutathionyl cysteine mark. Positions 218 to 249 (VKGEEDSSSGESSESSFVSIPETKDEANVPEV) are disordered.

This sequence belongs to the SufE family. As to quaternary structure, heterotetramer with NFS2. Interacts with NFS2 and NIFS1. Interacts in vitro with GRXS14, GRXS15, GRXS16 and GRXS17, but not with GRXC5. Interacts in vivo only with GRXS14 and GRXS16. Post-translationally, glutathionylated. Glutathionylation strongly reduces the stimulation of NFS2 activity. In terms of tissue distribution, expressed in roots, leaves, stems and flowers.

Its subcellular location is the plastid. It is found in the chloroplast stroma. The protein resides in the mitochondrion. Its pathway is cofactor biosynthesis; iron-sulfur cluster biosynthesis. Functionally, participates in cysteine desulfurization mediated by NFS2 in chloroplast and NIFS1 in mitochondrion. Activates the cysteine desulfurase activity of NFS2. Cysteine desulfurization mobilizes sulfur from L-cysteine to yield L-alanine and supplies the inorganic sulfur for iron-sulfur (Fe-S) cluster formation. Glutaredoxins regulate SUFE1 activity by inducing its reduction and deglutathionylation. This Arabidopsis thaliana (Mouse-ear cress) protein is SufE-like protein 1, chloroplastic/mitochondrial.